Reading from the N-terminus, the 159-residue chain is MADFSHLDEKGRVQMVDVSDKKTTDRLAIAVGKLSMKPDTLASILDQAMPKGNVLETARIAGIMAAKKTWELIPMCHPLELTHVQVDFFPETETSSIRIEGQARVAGRTGVEMEALTAVSVAALTIYDMCKSADKAMAIEKIHLVRKYGGKSGEFVNEG.

Substrate contacts are provided by residues methionine 75–histidine 77 and methionine 113–glutamate 114. Aspartate 128 is an active-site residue.

Belongs to the MoaC family. In terms of assembly, homohexamer; trimer of dimers.

It catalyses the reaction (8S)-3',8-cyclo-7,8-dihydroguanosine 5'-triphosphate = cyclic pyranopterin phosphate + diphosphate. It participates in cofactor biosynthesis; molybdopterin biosynthesis. Its function is as follows. Catalyzes the conversion of (8S)-3',8-cyclo-7,8-dihydroguanosine 5'-triphosphate to cyclic pyranopterin monophosphate (cPMP). In Desulfatibacillum aliphaticivorans, this protein is Cyclic pyranopterin monophosphate synthase.